We begin with the raw amino-acid sequence, 144 residues long: Endoribonuclease YbeY (144 aa).

The Zn(2+) site is built by H105, H109, and D115.

It belongs to the endoribonuclease YbeY family. Zn(2+) is required as a cofactor.

It is found in the cytoplasm. Its function is as follows. Single strand-specific metallo-endoribonuclease involved in late-stage 70S ribosome quality control and in maturation of the 3' terminus of the 16S rRNA. The sequence is that of Endoribonuclease YbeY from Chlorobium limicola (strain DSM 245 / NBRC 103803 / 6330).